The following is a 78-amino-acid chain: Translational regulator CsrA (78 aa).

The protein belongs to the CsrA/RsmA family. As to quaternary structure, homodimer; the beta-strands of each monomer intercalate to form a hydrophobic core, while the alpha-helices form wings that extend away from the core.

The protein localises to the cytoplasm. In terms of biological role, a translational regulator that binds mRNA to regulate translation initiation and/or mRNA stability. Usually binds in the 5'-UTR at or near the Shine-Dalgarno sequence preventing ribosome-binding, thus repressing translation. Its main target seems to be the major flagellin gene, while its function is anatagonized by FliW. The sequence is that of Translational regulator CsrA from Caldicellulosiruptor bescii (strain ATCC BAA-1888 / DSM 6725 / KCTC 15123 / Z-1320) (Anaerocellum thermophilum).